The following is a 156-amino-acid chain: Small ribosomal subunit protein uS7 (156 aa).

The protein belongs to the universal ribosomal protein uS7 family. Part of the 30S ribosomal subunit. Contacts proteins S9 and S11.

Its function is as follows. One of the primary rRNA binding proteins, it binds directly to 16S rRNA where it nucleates assembly of the head domain of the 30S subunit. Is located at the subunit interface close to the decoding center, probably blocks exit of the E-site tRNA. This is Small ribosomal subunit protein uS7 from Synechococcus sp. (strain JA-2-3B'a(2-13)) (Cyanobacteria bacterium Yellowstone B-Prime).